The sequence spans 473 residues: Mogroside IIIx synthase (473 aa).

The active-site Proton acceptor is the H21. Residue D123 is the Charge relay of the active site. UDP-alpha-D-glucose contacts are provided by T274, Q337, W355, N356, S357, E360, D376, and Q377.

Belongs to the UDP-glycosyltransferase family. As to expression, highly expressed in mature fruits.

It carries out the reaction mogroside IIE + UDP-alpha-D-glucose = mogroside IIIX + UDP + H(+). The enzyme catalyses mogroside III + UDP-alpha-D-glucose = siamenoside I + UDP + H(+). Its pathway is secondary metabolite biosynthesis; terpenoid biosynthesis. Functionally, UDP-glycosyltransferase involved in the biosynthesis of cucurbitacin and mogroside tetracyclic triterpene natural products (e.g. siamenoside I and mogrosides IV, V and VI). Cucurbitacins have cytotoxic properties and exhibit deterrent taste as a defense barrier against herbivores. Mogrosides are nonsugar highly oxygenated compounds used as high-intensity zero-calorie sweeteners; they also possess pharmacological properties such as regulating immunity, lowering blood sugar and lipid levels, protecting the liver, and acting as antioxidants and antitumor agents. Catalyzes the branched glucosylations of mogroside II-E and mogroside III. This chain is Mogroside IIIx synthase, found in Siraitia grosvenorii (Monk's fruit).